The primary structure comprises 479 residues: UDP-N-acetylmuramate--L-alanine ligase (479 aa).

115-121 (GTHGKTT) serves as a coordination point for ATP.

Belongs to the MurCDEF family.

The protein resides in the cytoplasm. It catalyses the reaction UDP-N-acetyl-alpha-D-muramate + L-alanine + ATP = UDP-N-acetyl-alpha-D-muramoyl-L-alanine + ADP + phosphate + H(+). It participates in cell wall biogenesis; peptidoglycan biosynthesis. Its function is as follows. Cell wall formation. The protein is UDP-N-acetylmuramate--L-alanine ligase of Acidiphilium cryptum (strain JF-5).